Here is a 197-residue protein sequence, read N- to C-terminus: MIHFSRSLTRLLGELKKLPGVGDKTALRLAFHLLKSPDNLTALAESLLEVKAGVRFCSVCFGITEDDPCHLCSTERDRTTICVVEEPQDILAMERSRAFKGRYHVLHGALSPLNGITPGDLKIAELMKRLESGAIREVLIATNFTVEGEATALYLTRLIKPLSIRVTRLAHGIPLGSDLEFIDAATVQRAVEGRSEL.

The C4-type zinc-finger motif lies at 57-72; it reads CSVCFGITEDDPCHLC. The Toprim domain maps to 79–174; the sequence is TTICVVEEPQ…RVTRLAHGIP (96 aa).

This sequence belongs to the RecR family.

In terms of biological role, may play a role in DNA repair. It seems to be involved in an RecBC-independent recombinational process of DNA repair. It may act with RecF and RecO. The polypeptide is Recombination protein RecR (Geotalea daltonii (strain DSM 22248 / JCM 15807 / FRC-32) (Geobacter daltonii)).